The primary structure comprises 185 residues: Translocon-associated protein subunit gamma (185 aa).

Met1 is subject to N-acetylmethionine. At 1–27 the chain is on the lumenal side; sequence MAPKGSSKQQSEEDLLLQDFSRNLSAK. Phosphoserine occurs at positions 7 and 11. A helical membrane pass occupies residues 28 to 48; the sequence is SSALFFGNAFIVSAIPIWLYW. Over 49–54 the chain is Cytoplasmic; the sequence is RIWHMD. Residues 55–76 form a helical membrane-spanning segment; the sequence is LIQSAVLYSVMTLVSTYLVAFA. Residues 77–135 lie on the Lumenal side of the membrane; it reads YKNVKFVLKHKVAQKREDAVSKEVTRKLSEADNRKMSRKEKDERILWKKNEVADYEATT. The residue at position 105 (Ser105) is a Phosphoserine. The helical transmembrane segment at 136–157 threads the bilayer; sequence FSIFYNNTLFLVVVIVASFFIL. Topologically, residues 158–163 are cytoplasmic; it reads KNFNPT. A helical transmembrane segment spans residues 164–184; the sequence is VNYILSISASSGLIALLSTGS.

It belongs to the TRAP-gamma family. As to quaternary structure, heterotetramer of TRAP-alpha, TRAP-beta, TRAP-delta and TRAP-gamma.

The protein localises to the endoplasmic reticulum membrane. Its function is as follows. TRAP proteins are part of a complex whose function is to bind calcium to the ER membrane and thereby regulate the retention of ER resident proteins. The chain is Translocon-associated protein subunit gamma (SSR3) from Homo sapiens (Human).